Here is a 360-residue protein sequence, read N- to C-terminus: Cannabinoid receptor 2 (360 aa).

The Extracellular portion of the chain corresponds to 1–33 (MAGCRELELTNGSNGGLEFNPMKEYMILSDAQQ). An N-linked (GlcNAc...) asparagine glycan is attached at Asn11. A helical membrane pass occupies residues 34–59 (IAVAVLCTLMGLLSALENVAVLYLIL). Residues 60–71 (SSQRLRRKPSYL) are Cytoplasmic-facing. The chain crosses the membrane as a helical span at residues 72-92 (FIGSLAGADFLASVIFACNFV). Residues 93–104 (IFHVFHGVDSRN) are Extracellular-facing. A helical membrane pass occupies residues 105–129 (IFLLKIGSVTMTFTASVGSLLLTAV). The Cytoplasmic segment spans residues 130–149 (DRYLCLCYPPTYKALVTRGR). The chain crosses the membrane as a helical span at residues 150–172 (ALVALGVMWVLSALISYLPLMGW). At 173-188 (TCCPSPCSELFPLIPN) the chain is on the extracellular side. Residues 189–214 (DYLLGWLLFIAILFSGIIYTYGYVLW) form a helical membrane-spanning segment. The Cytoplasmic segment spans residues 215–246 (KAHQHVASLAEHQDRQVPGIARMRLDVRLAKT). Residues 247-267 (LGLVMAVLLICWFPALALMGH) form a helical membrane-spanning segment. Residues 268 to 279 (SLVTTLSDKVKE) are Extracellular-facing. Residues 280–301 (AFAFCSMLCLVNSMINPIIYAL) traverse the membrane as a helical segment. Topologically, residues 302-360 (RSGEIRSAAQHCLTGWKKYLQGLGSEGKEEAPKSSVTETEAEVKTTTGPGSRTPGCSNC) are cytoplasmic. The segment at 327–360 (EGKEEAPKSSVTETEAEVKTTTGPGSRTPGCSNC) is disordered. Ser335 and Ser336 each carry phosphoserine. At Thr338 the chain carries Phosphothreonine. The span at 349-360 (GPGSRTPGCSNC) shows a compositional bias: polar residues. Phosphoserine is present on Ser352.

Belongs to the G-protein coupled receptor 1 family. Constitutively phosphorylated on Ser-352; phosphorylation increases cell internalization and desensitizes the receptor. In terms of tissue distribution, expressed in spleen and brain by neurons and glial cells (at protein level). Expressed in lung, testis and thymus but not in heart, liver or kidney. Expressed in cerebellum, cortex and brainstem.

The protein localises to the cell membrane. It localises to the cell projection. The protein resides in the dendrite. Its subcellular location is the perikaryon. Functionally, heterotrimeric G protein-coupled receptor for endocannabinoid 2-arachidonoylglycerol mediating inhibition of adenylate cyclase. May function in inflammatory response, nociceptive transmission and bone homeostasis. This chain is Cannabinoid receptor 2 (Cnr2), found in Rattus norvegicus (Rat).